Reading from the N-terminus, the 453-residue chain is Glutamyl-tRNA(Gln) amidotransferase subunit A (453 aa).

Active-site charge relay system residues include Lys-53 and Ser-128. Catalysis depends on Ser-152, which acts as the Acyl-ester intermediate.

This sequence belongs to the amidase family. GatA subfamily. As to quaternary structure, heterotrimer of A, B and C subunits.

It carries out the reaction L-glutamyl-tRNA(Gln) + L-glutamine + ATP + H2O = L-glutaminyl-tRNA(Gln) + L-glutamate + ADP + phosphate + H(+). Its function is as follows. Allows the formation of correctly charged Gln-tRNA(Gln) through the transamidation of misacylated Glu-tRNA(Gln) in organisms which lack glutaminyl-tRNA synthetase. The reaction takes place in the presence of glutamine and ATP through an activated gamma-phospho-Glu-tRNA(Gln). The polypeptide is Glutamyl-tRNA(Gln) amidotransferase subunit A (Helicobacter pylori (strain G27)).